We begin with the raw amino-acid sequence, 151 residues long: Small ribosomal subunit protein uS13 (151 aa).

Residues 131-151 are disordered; the sequence is RGQRTKSSFRRGRTVGVKKKQ. Positions 133-151 are enriched in basic residues; that stretch reads QRTKSSFRRGRTVGVKKKQ.

This sequence belongs to the universal ribosomal protein uS13 family. Part of the 30S ribosomal subunit. Forms a loose heterodimer with protein S19. Forms two bridges to the 50S subunit in the 70S ribosome.

In terms of biological role, located at the top of the head of the 30S subunit, it contacts several helices of the 16S rRNA. In the 70S ribosome it contacts the 23S rRNA (bridge B1a) and protein L5 of the 50S subunit (bridge B1b), connecting the 2 subunits; these bridges are implicated in subunit movement. This chain is Small ribosomal subunit protein uS13, found in Methanopyrus kandleri (strain AV19 / DSM 6324 / JCM 9639 / NBRC 100938).